A 110-amino-acid polypeptide reads, in one-letter code: UPF0060 membrane protein Ping_0587 (110 aa).

4 consecutive transmembrane segments (helical) span residues 6–26 (IFGIFTVTAVAEIVGCYLPYL), 33–53 (SIWLLVPAAFSLAAFVWLLTL), 61–81 (TYAAYGGIYVSVALMWLWLVE), and 87–107 (MTDLLGVLICIIGMAVIMFGP).

It belongs to the UPF0060 family.

Its subcellular location is the cell inner membrane. The polypeptide is UPF0060 membrane protein Ping_0587 (Psychromonas ingrahamii (strain DSM 17664 / CCUG 51855 / 37)).